A 270-amino-acid polypeptide reads, in one-letter code: Ribonuclease HII (270 aa).

In terms of domain architecture, RNase H type-2 spans 84–270 (RYIAGVDEVG…HRNSFLTKLL (187 aa)). Residues D90, E91, and D186 each coordinate a divalent metal cation.

The protein belongs to the RNase HII family. Requires Mn(2+) as cofactor. The cofactor is Mg(2+).

Its subcellular location is the cytoplasm. It catalyses the reaction Endonucleolytic cleavage to 5'-phosphomonoester.. Functionally, endonuclease that specifically degrades the RNA of RNA-DNA hybrids. This is Ribonuclease HII from Clostridium beijerinckii (strain ATCC 51743 / NCIMB 8052) (Clostridium acetobutylicum).